The following is an 848-amino-acid chain: DNA mismatch repair protein MutS (848 aa).

605–612 (GPNMAGKS) serves as a coordination point for ATP.

Belongs to the DNA mismatch repair MutS family.

In terms of biological role, this protein is involved in the repair of mismatches in DNA. It is possible that it carries out the mismatch recognition step. This protein has a weak ATPase activity. The sequence is that of DNA mismatch repair protein MutS from Leptospira borgpetersenii serovar Hardjo-bovis (strain JB197).